The chain runs to 391 residues: Elongation factor Tu (391 aa).

Residues 10 to 201 (KPHVNIGTIG…AVDDYIPTPE (192 aa)) form the tr-type G domain. Positions 19 to 26 (GHVDHGKT) are G1. Residue 19-26 (GHVDHGKT) participates in GTP binding. Mg(2+) is bound at residue T26. The interval 55-59 (GITIS) is G2. The segment at 76–79 (DCPG) is G3. GTP contacts are provided by residues 76-80 (DCPGH) and 131-134 (NKVD). The interval 131–134 (NKVD) is G4. The tract at residues 169–171 (SAL) is G5.

The protein belongs to the TRAFAC class translation factor GTPase superfamily. Classic translation factor GTPase family. EF-Tu/EF-1A subfamily. In terms of assembly, monomer.

The protein resides in the cytoplasm. It carries out the reaction GTP + H2O = GDP + phosphate + H(+). GTP hydrolase that promotes the GTP-dependent binding of aminoacyl-tRNA to the A-site of ribosomes during protein biosynthesis. This is Elongation factor Tu from Paracoccus denitrificans (strain Pd 1222).